The chain runs to 431 residues: Mannan endo-1,4-beta-mannosidase 5 (431 aa).

An N-terminal signal peptide occupies residues 1 to 24 (MVPTRNRPMLRILGFFICAAFIYL). N-linked (GlcNAc...) asparagine glycosylation is present at asparagine 45. Substrate is bound at residue tryptophan 97. Residue asparagine 168 is glycosylated (N-linked (GlcNAc...) asparagine). Asparagine 213 is a substrate binding site. Glutamate 214 (proton donor) is an active-site residue. Residue asparagine 282 is glycosylated (N-linked (GlcNAc...) asparagine). Residue tyrosine 294 coordinates substrate. Asparagine 301 is a glycosylation site (N-linked (GlcNAc...) asparagine). Glutamate 334 functions as the Nucleophile in the catalytic mechanism. Residue tryptophan 376 participates in substrate binding.

The protein belongs to the glycosyl hydrolase 5 (cellulase A) family. Expressed in stems.

It is found in the secreted. The enzyme catalyses Random hydrolysis of (1-&gt;4)-beta-D-mannosidic linkages in mannans, galactomannans and glucomannans.. This Arabidopsis thaliana (Mouse-ear cress) protein is Mannan endo-1,4-beta-mannosidase 5 (MAN5).